The primary structure comprises 361 residues: D-alanine--D-alanine ligase (361 aa).

Residues 139 to 336 (KLLLKEKEIS…FSQIIDNMIN (198 aa)) form the ATP-grasp domain. Position 167-222 (167-222 (EKNLGYPMIVKPARLGSSIGVSKVVDRKNFEEAVKNVLLFDNKVLVEKWINAREIN)) interacts with ATP. Asp-296, Glu-307, and Asn-309 together coordinate Mg(2+).

It belongs to the D-alanine--D-alanine ligase family. It depends on Mg(2+) as a cofactor. The cofactor is Mn(2+).

Its subcellular location is the cytoplasm. It catalyses the reaction 2 D-alanine + ATP = D-alanyl-D-alanine + ADP + phosphate + H(+). It functions in the pathway cell wall biogenesis; peptidoglycan biosynthesis. Functionally, cell wall formation. This chain is D-alanine--D-alanine ligase, found in Thermosipho melanesiensis (strain DSM 12029 / CIP 104789 / BI429).